A 453-amino-acid polypeptide reads, in one-letter code: Na(+)/H(+) antiporter NhaA (453 aa).

11 helical membrane passes run 27 to 47 (FLHIEALSGIVLLLAAASALI), 78 to 98 (LHFWVNDALMTIFFLVAGMEI), 114 to 134 (ILPIVAAIGGVCVPAIIYFIF), 143 to 163 (GWAVPTATDIAFALGILALLG), 172 to 192 (IILLSLAIIDDIIAVLIIAFF), 201 to 221 (GLLIAGGGIALVLFFQWIGLA), 222 to 242 (SAWLYILPGAIIWWGLMVTGV), 316 to 336 (PWVAYGIMPVFAFANAGVSFA), 346 to 366 (FLIVFGVVIGLFVGKPLGIIT), 385 to 405 (WAGILLIGFLAGIGFTMSIFV), and 421 to 441 (IGVLCGSGLSALIGLGYGFIY).

Belongs to the NhaA Na(+)/H(+) (TC 2.A.33) antiporter family.

The protein localises to the cell inner membrane. The catalysed reaction is Na(+)(in) + 2 H(+)(out) = Na(+)(out) + 2 H(+)(in). In terms of biological role, na(+)/H(+) antiporter that extrudes sodium in exchange for external protons. This Bartonella tribocorum (strain CIP 105476 / IBS 506) protein is Na(+)/H(+) antiporter NhaA.